The chain runs to 246 residues: Small ribosomal subunit protein uS2 (246 aa).

Belongs to the universal ribosomal protein uS2 family.

The polypeptide is Small ribosomal subunit protein uS2 (Burkholderia cenocepacia (strain HI2424)).